A 332-amino-acid polypeptide reads, in one-letter code: Mediator of RNA polymerase II transcription subunit 3 (332 aa).

Disordered regions lie at residues 125–206 (EPVR…PGAT) and 221–242 (SPLNGISPSRKPAQPHHQTTPS). Over residues 132-143 (SPSYRRPSNRSS) the composition is skewed to low complexity. Polar residues predominate over residues 144–153 (ADTPSSNAPT). Composition is skewed to low complexity over residues 155-166 (SAAVVSGAALVA) and 184-200 (PSVSASVVPSANSSGPA).

This sequence belongs to the Mediator complex subunit 3 family. As to quaternary structure, component of the Mediator complex.

Its subcellular location is the nucleus. Its function is as follows. Component of the Mediator complex, a coactivator involved in regulated gene transcription of nearly all RNA polymerase II-dependent genes. Mediator functions as a bridge to convey information from gene-specific regulatory proteins to the basal RNA polymerase II transcription machinery. Mediator is recruited to promoters by direct interactions with regulatory proteins and serves as a scaffold for the assembly of a functional preinitiation complex with RNA polymerase II and the general transcription factors. In Eremothecium gossypii (strain ATCC 10895 / CBS 109.51 / FGSC 9923 / NRRL Y-1056) (Yeast), this protein is Mediator of RNA polymerase II transcription subunit 3 (PGD1).